The sequence spans 179 residues: Putative mediator of RNA polymerase II transcription subunit 28 (179 aa).

A coiled-coil region spans residues serine 81 to tyrosine 119.

This sequence belongs to the Mediator complex subunit 28 family. Component of the Mediator complex.

It localises to the nucleus. Component of the Mediator complex, a coactivator involved in the regulated transcription of nearly all RNA polymerase II-dependent genes. Mediator functions as a bridge to convey information from gene-specific regulatory proteins to the basal RNA polymerase II transcription machinery. Mediator is recruited to promoters by direct interactions with regulatory proteins and serves as a scaffold for the assembly of a functional preinitiation complex with RNA polymerase II and the general transcription factors. The sequence is that of Putative mediator of RNA polymerase II transcription subunit 28 (med28) from Dictyostelium discoideum (Social amoeba).